A 737-amino-acid polypeptide reads, in one-letter code: Palmitoyltransferase akr1 (737 aa).

Over residues 1 to 15 the composition is skewed to low complexity; it reads MSSGNSSTGTHTNGN. Residues 1 to 39 are disordered; the sequence is MSSGNSSTGTHTNGNFATLGSSPPSAVGGKGRAIPPKVT. The Cytoplasmic segment spans residues 1-313; it reads MSSGNSSTGT…WVRNKSLMSK (313 aa). ANK repeat units follow at residues 96–125, 130–159, 163–192, 196–225, and 228–258; these read EGITPLHWAAINNQYAMCKFLLDSGADVNA, SVATPAMWAAQRCHYYIVHLLLQRGADPLL, QGYNILHLATIDGNAFLLVLLLHQEIPVDV, QGHTGLMWAAYKGYPALVDLFLRWGAHANA, and EGGLTPLHWALVKGSLPCVLKLIEYGADKFA. The next 2 helical transmembrane spans lie at 314–334 and 335–355; these read FFFLWPFAIVFAAVWILSNMV and VYAAIPMMLVTVFGLQWVAQK. The Cytoplasmic segment spans residues 356–374; that stretch reads AASQGPSEYRILQKTPYLS. The chain crosses the membrane as a helical span at residues 375–395; that stretch reads GVFAGSLFWVGFRYVFYVLPV. The Lumenal segment spans residues 396–401; that stretch reads TYSTSP. A helical membrane pass occupies residues 402–422; it reads ILNGLFAIFFSLTTYFYIYSM. At 423-498 the chain is on the cytoplasmic side; the sequence is VEDPGFVPKL…DNCVGANNLR (76 aa). In terms of domain architecture, DHHC spans 455-505; that stretch reads NFCVSCMVRRPLRSKHCKRCARCVAKHDHHCPWIDNCVGANNLRHFVLYIT. Residue C485 is the S-palmitoyl cysteine intermediate of the active site. The chain crosses the membrane as a helical span at residues 499–519; it reads HFVLYITCLEVGIVLFVQLTF. Topologically, residues 520–548 are lumenal; that stretch reads NYINSLPAPAQPQCNIINETLCDFVLRDT. The helical transmembrane segment at 549 to 569 threads the bilayer; it reads FTLVLDLWVCIQLVWITMLVA. Topologically, residues 570 to 737 are cytoplasmic; that stretch reads VQMIQISRNQ…LSVEDPEQGV (168 aa).

This sequence belongs to the DHHC palmitoyltransferase family. AKR/ZDHHC17 subfamily.

The protein localises to the early endosome membrane. The protein resides in the golgi apparatus membrane. It carries out the reaction L-cysteinyl-[protein] + hexadecanoyl-CoA = S-hexadecanoyl-L-cysteinyl-[protein] + CoA. Palmitoyltransferase specific for casein kinase 1. The protein is Palmitoyltransferase akr1 (akr1) of Aspergillus oryzae (strain ATCC 42149 / RIB 40) (Yellow koji mold).